Here is an 820-residue protein sequence, read N- to C-terminus: Leucine--tRNA ligase (820 aa).

The 'HIGH' region motif lies at 42–52 (PYPSGDLHMGH). Positions 576–580 (KMSKS) match the 'KMSKS' region motif. Lysine 579 is a binding site for ATP.

This sequence belongs to the class-I aminoacyl-tRNA synthetase family.

Its subcellular location is the cytoplasm. It carries out the reaction tRNA(Leu) + L-leucine + ATP = L-leucyl-tRNA(Leu) + AMP + diphosphate. This is Leucine--tRNA ligase from Coxiella burnetii (strain RSA 331 / Henzerling II).